Here is a 401-residue protein sequence, read N- to C-terminus: Argininosuccinate synthase (401 aa).

Residue 8–16 coordinates ATP; sequence AYSGGLDTS. Tyr87 is a binding site for L-citrulline. Gly117 contributes to the ATP binding site. L-aspartate is bound by residues Thr119, Asn123, and Asp124. Asn123 contacts L-citrulline. The L-citrulline site is built by Arg127, Ser175, Glu259, and Tyr271.

The protein belongs to the argininosuccinate synthase family. Type 1 subfamily. In terms of assembly, homotetramer.

It localises to the cytoplasm. It catalyses the reaction L-citrulline + L-aspartate + ATP = 2-(N(omega)-L-arginino)succinate + AMP + diphosphate + H(+). It functions in the pathway amino-acid biosynthesis; L-arginine biosynthesis; L-arginine from L-ornithine and carbamoyl phosphate: step 2/3. The chain is Argininosuccinate synthase from Paenarthrobacter aurescens (strain TC1).